The primary structure comprises 174 residues: Guided entry of tail-anchored proteins factor 1 (174 aa).

At 1-8 (MSAAEADR) the chain is on the lumenal side. A helical transmembrane segment spans residues 9–29 (WAWLLVLSFVFGCNVLRILLP). At 30–99 (SFSFFMSRVL…VKARTAQLAK (70 aa)) the chain is on the cytoplasmic side. Residues 39-94 (LQKDAEQESQMRAEIQGMKQELSTVNMMDEFARYARLERKINKMTDKLKTHVKART) adopt a coiled-coil conformation. Residues 39–97 (LQKDAEQESQMRAEIQGMKQELSTVNMMDEFARYARLERKINKMTDKLKTHVKARTAQL) are interaction with GET3/TRC40. The helical transmembrane segment at 100–120 (IKWVISVAFYILQAALMVSLI) threads the bilayer. Residues 121–148 (WKYYSVPVAVVPSKWITPLDRLVAFPTR) are Lumenal-facing. The helical transmembrane segment at 149 to 169 (VAGGVGITCWILVCNKVVAIV) threads the bilayer. Topologically, residues 170–174 (LHPFS) are cytoplasmic.

The protein belongs to the WRB/GET1 family. In terms of assembly, component of the Golgi to ER traffic (GET) complex, which is composed of GET1/WRB, CAMLG/GET2 and GET3. Within the complex, GET1 and CAMLG form a heterotetramer which is stabilized by phosphatidylinositol binding and which binds to the GET3 homodimer. Interacts with CAMLG (via C-terminus). GET3 shows a higher affinity for CAMLG than for GET1.

It is found in the endoplasmic reticulum membrane. Functionally, required for the post-translational delivery of tail-anchored (TA) proteins to the endoplasmic reticulum. Together with CAMLG/GET2, acts as a membrane receptor for soluble GET3/TRC40, which recognizes and selectively binds the transmembrane domain of TA proteins in the cytosol. Required to ensure correct topology and ER insertion of CAMLG. The sequence is that of Guided entry of tail-anchored proteins factor 1 from Bos taurus (Bovine).